The chain runs to 555 residues: Carboxylesterase patB (555 aa).

An N-terminal signal peptide occupies residues Met-1–Ala-16. 2 N-linked (GlcNAc...) asparagine glycosylation sites follow: Asn-37 and Asn-75. Ser-258 functions as the Acyl-ester intermediate in the catalytic mechanism. Ser-258 is a binding site for substrate. Asn-311 carries an N-linked (GlcNAc...) asparagine glycan. Glu-380 serves as the catalytic Charge relay system. Residues Asn-388 and Asn-491 are each glycosylated (N-linked (GlcNAc...) asparagine).

It belongs to the type-B carboxylesterase/lipase family.

It localises to the cytoplasm. The protein resides in the cytosol. It carries out the reaction a carboxylic ester + H2O = an alcohol + a carboxylate + H(+). It participates in mycotoxin biosynthesis; patulin biosynthesis. Functionally, carboxylesterase; part of the gene cluster that mediates the biosynthesis of patulin, an acetate-derived tetraketide mycotoxin produced by several fungal species that shows antimicrobial properties against several bacteria. The function of patB in patulin synthesis has still to be characterized. The pathway begins with the synthesis of 6-methylsalicylic acid by the polyketide synthase (PKS) patK via condensation of acetate and malonate units. The 6-methylsalicylic acid decarboxylase patG then catalyzes the decarboxylation of 6-methylsalicylic acid to yield m-cresol (also known as 3-methylphenol). These first reactions occur in the cytosol. The intermediate m-cresol is then transported into the endoplasmic reticulum where the cytochrome P450 monooxygenase patH converts it to m-hydroxybenzyl alcohol, which is further converted to gentisyl alcohol by the cytochrome P450 monooxygenase patI. The oxidoreductases patJ and patO further convert gentisyl alcohol to isoepoxydon in the vacuole. PatN catalyzes then the transformation of isoepoxydon into phyllostine. The cluster protein patF is responsible for the conversion from phyllostine to neopatulin whereas the alcohol dehydrogenase patD converts neopatulin to E-ascladiol. The steps between isoepoxydon and E-ascladiol occur in the cytosol, and E-ascladiol is probably secreted to the extracellular space by one of the cluster-specific transporters patC or patM. Finally, the secreted patulin synthase patE catalyzes the conversion of E-ascladiol to patulin. This Aspergillus clavatus (strain ATCC 1007 / CBS 513.65 / DSM 816 / NCTC 3887 / NRRL 1 / QM 1276 / 107) protein is Carboxylesterase patB.